Here is a 293-residue protein sequence, read N- to C-terminus: Ribosomal protein L11 methyltransferase (293 aa).

Positions 145, 166, 188, and 230 each coordinate S-adenosyl-L-methionine.

Belongs to the methyltransferase superfamily. PrmA family.

It localises to the cytoplasm. It catalyses the reaction L-lysyl-[protein] + 3 S-adenosyl-L-methionine = N(6),N(6),N(6)-trimethyl-L-lysyl-[protein] + 3 S-adenosyl-L-homocysteine + 3 H(+). Functionally, methylates ribosomal protein L11. This Escherichia coli (strain 55989 / EAEC) protein is Ribosomal protein L11 methyltransferase.